The primary structure comprises 163 residues: ATP synthase subunit b' (163 aa).

Residues 28 to 45 form a helical membrane-spanning segment; the sequence is LMAIQFLLLALILNATLY.

It belongs to the ATPase B chain family. As to quaternary structure, F-type ATPases have 2 components, F(1) - the catalytic core - and F(0) - the membrane proton channel. F(1) has five subunits: alpha(3), beta(3), gamma(1), delta(1), epsilon(1). F(0) has four main subunits: a(1), b(1), b'(1) and c(10-14). The alpha and beta chains form an alternating ring which encloses part of the gamma chain. F(1) is attached to F(0) by a central stalk formed by the gamma and epsilon chains, while a peripheral stalk is formed by the delta, b and b' chains.

It is found in the cellular thylakoid membrane. Functionally, f(1)F(0) ATP synthase produces ATP from ADP in the presence of a proton or sodium gradient. F-type ATPases consist of two structural domains, F(1) containing the extramembraneous catalytic core and F(0) containing the membrane proton channel, linked together by a central stalk and a peripheral stalk. During catalysis, ATP synthesis in the catalytic domain of F(1) is coupled via a rotary mechanism of the central stalk subunits to proton translocation. In terms of biological role, component of the F(0) channel, it forms part of the peripheral stalk, linking F(1) to F(0). The b'-subunit is a diverged and duplicated form of b found in plants and photosynthetic bacteria. The chain is ATP synthase subunit b' from Nostoc sp. (strain PCC 7120 / SAG 25.82 / UTEX 2576).